Here is a 379-residue protein sequence, read N- to C-terminus: Cytochrome b (379 aa).

4 helical membrane-spanning segments follow: residues 33-53, 77-98, 113-133, and 178-198; these read FGSL…FLAM, WLIR…FIHV, WNIG…GYVL, and FFAF…VHLL. The heme b site is built by His83 and His97. Heme b-binding residues include His182 and His196. Residue His201 participates in a ubiquinone binding. 4 helical membrane passes run 226-246, 288-308, 320-340, and 347-367; these read IKDL…ALFF, LGGV…PLLN, ITQT…WIGG, and FTTI…IIMP.

The protein belongs to the cytochrome b family. In terms of assembly, the cytochrome bc1 complex contains 11 subunits: 3 respiratory subunits (MT-CYB, CYC1 and UQCRFS1), 2 core proteins (UQCRC1 and UQCRC2) and 6 low-molecular weight proteins (UQCRH/QCR6, UQCRB/QCR7, UQCRQ/QCR8, UQCR10/QCR9, UQCR11/QCR10 and a cleavage product of UQCRFS1). This cytochrome bc1 complex then forms a dimer. The cofactor is heme b.

It localises to the mitochondrion inner membrane. Component of the ubiquinol-cytochrome c reductase complex (complex III or cytochrome b-c1 complex) that is part of the mitochondrial respiratory chain. The b-c1 complex mediates electron transfer from ubiquinol to cytochrome c. Contributes to the generation of a proton gradient across the mitochondrial membrane that is then used for ATP synthesis. This Deltamys kempi (Kemp's grass mouse) protein is Cytochrome b (MT-CYB).